A 92-amino-acid chain; its full sequence is Large ribosomal subunit protein bL27 (92 aa).

Positions 1–22 (MAHTKAGGSTRNGRDSRGQRLG) are disordered.

This sequence belongs to the bacterial ribosomal protein bL27 family.

In Mycoplasmopsis agalactiae (strain NCTC 10123 / CIP 59.7 / PG2) (Mycoplasma agalactiae), this protein is Large ribosomal subunit protein bL27.